Here is a 390-residue protein sequence, read N- to C-terminus: Phosphoglycerate kinase (390 aa).

Substrate contacts are provided by residues 21–23 (DMN), Arg36, 59–62 (HLGR), Arg113, and Arg146. Residues Lys197, Glu319, and 345–348 (GGDT) each bind ATP.

Belongs to the phosphoglycerate kinase family. In terms of assembly, monomer.

The protein resides in the cytoplasm. The enzyme catalyses (2R)-3-phosphoglycerate + ATP = (2R)-3-phospho-glyceroyl phosphate + ADP. It functions in the pathway carbohydrate degradation; glycolysis; pyruvate from D-glyceraldehyde 3-phosphate: step 2/5. This Laribacter hongkongensis (strain HLHK9) protein is Phosphoglycerate kinase.